Here is a 43-residue protein sequence, read N- to C-terminus: Potassium channel toxin gamma-KTx 4.6 (43 aa).

Intrachain disulfides connect Cys-5–Cys-23, Cys-11–Cys-34, Cys-20–Cys-39, and Cys-24–Cys-41.

The protein belongs to the ergtoxin family. Gamma-KTx 4 subfamily. Expressed by the venom gland.

The protein localises to the secreted. Its function is as follows. Reversibly blocks Kv11/ERG potassium channels. This Centruroides limpidus (Mexican scorpion) protein is Potassium channel toxin gamma-KTx 4.6.